Consider the following 378-residue polypeptide: MDALSEANGTFALTLLKKLGEGNSKNVFISPLSISSALAMVLLGAKGNTAAQMCQTLSLNKSSGGGEDVHQGFQNLLSEVNRRDTQYLLRTANRLFGEKTYDFLSSFKDSCHKFYQAEMEELDFVSATEQSRKHINTWVAEKTEGKIRDLLPANSVNPMTRLVLVNAIYFKGNWDTQFNKEHTEERPFRVSKNVEKPVQMMFKKSTCKITYIGEISTQILVLPYVGQELNMVILLPSESTDLNTVEKALTYEKFIAWTKPDVMDEEEVEVFLPRFTLEESYDMEEFLQELGMTDAFEETRADFSGMSSGRGLHLSKVMHKSFVEVTEEGTEAAAATGAVVMMRCLMVVPRFNANHPFLFFIQHSKTGAILFCGRFCSP.

Position 1 is an N-acetylmethionine (Met1). Lys196 carries the post-translational modification N6-acetyllysine.

This sequence belongs to the serpin family. Ov-serpin subfamily. In terms of assembly, forms a complex with the monomeric form of beta-tryptase. In terms of tissue distribution, brain.

It localises to the cytoplasm. Functionally, inhibitor of cathepsin G, kallikrein-8 and thrombin. May play an important role in the inner ear in the protection against leakage of lysosomal content during stress. May be involved in the regulation of serine proteinases present in the brain or extravasated from the blood. This chain is Serpin B6 (SERPINB6), found in Bos taurus (Bovine).